The primary structure comprises 167 residues: Leptin (167 aa).

An N-terminal signal peptide occupies residues 1–21 (MRCGPLYRFLWLWPYLSYVEA). Cysteines 117 and 167 form a disulfide.

It belongs to the leptin family.

The protein resides in the secreted. In terms of biological role, key player in the regulation of energy balance and body weight control. Once released into the circulation, has central and peripheral effects by binding LEPR, found in many tissues, which results in the activation of several major signaling pathways. In the hypothalamus, acts as an appetite-regulating factor that induces a decrease in food intake and an increase in energy consumption by inducing anorexinogenic factors and suppressing orexigenic neuropeptides, also regulates bone mass and secretion of hypothalamo-pituitary-adrenal hormones. In the periphery, increases basal metabolism, influences reproductive function, regulates pancreatic beta-cell function and insulin secretion, is pro-angiogenic for endothelial cell and affects innate and adaptive immunity. In the arcuate nucleus of the hypothalamus, activates by depolarization POMC neurons inducing FOS and SOCS3 expression to release anorexigenic peptides and inhibits by hyperpolarization NPY neurons inducing SOCS3 with a consequent reduction on release of orexigenic peptides. In addition to its known satiety inducing effect, has a modulatory role in nutrient absorption. In the intestine, reduces glucose absorption by enterocytes by activating PKC and leading to a sequential activation of p38, PI3K and ERK signaling pathways which exerts an inhibitory effect on glucose absorption. Acts as a growth factor on certain tissues, through the activation of different signaling pathways increases expression of genes involved in cell cycle regulation such as CCND1, via JAK2-STAT3 pathway, or VEGFA, via MAPK1/3 and PI3K-AKT1 pathways. May also play an apoptotic role via JAK2-STAT3 pathway and up-regulation of BIRC5 expression. Pro-angiogenic, has mitogenic activity on vascular endothelial cells and plays a role in matrix remodeling by regulating the expression of matrix metalloproteinases (MMPs) and tissue inhibitors of metalloproteinases (TIMPs). In innate immunity, modulates the activity and function of neutrophils by increasing chemotaxis and the secretion of oxygen radicals. Increases phagocytosis by macrophages and enhances secretion of pro-inflammatory mediators. Increases cytotoxic ability of NK cells. Plays a pro-inflammatory role, in synergy with IL1B, by inducing NOS2 which promotes the production of IL6, IL8 and Prostaglandin E2, through a signaling pathway that involves JAK2, PI3K, MAP2K1/MEK1 and MAPK14/p38. In adaptive immunity, promotes the switch of memory T-cells towards T helper-1 cell immune responses. Increases CD4(+)CD25(-) T-cell proliferation and reduces autophagy during TCR (T-cell receptor) stimulation, through MTOR signaling pathway activation and BCL2 up-regulation. This chain is Leptin (LEP), found in Capra hircus (Goat).